The chain runs to 954 residues: Glycine dehydrogenase (decarboxylating) (954 aa).

Lys-706 bears the N6-(pyridoxal phosphate)lysine mark.

The protein belongs to the GcvP family. As to quaternary structure, the glycine cleavage system is composed of four proteins: P, T, L and H. Pyridoxal 5'-phosphate serves as cofactor.

The catalysed reaction is N(6)-[(R)-lipoyl]-L-lysyl-[glycine-cleavage complex H protein] + glycine + H(+) = N(6)-[(R)-S(8)-aminomethyldihydrolipoyl]-L-lysyl-[glycine-cleavage complex H protein] + CO2. Functionally, the glycine cleavage system catalyzes the degradation of glycine. The P protein binds the alpha-amino group of glycine through its pyridoxal phosphate cofactor; CO(2) is released and the remaining methylamine moiety is then transferred to the lipoamide cofactor of the H protein. The protein is Glycine dehydrogenase (decarboxylating) of Thermosynechococcus vestitus (strain NIES-2133 / IAM M-273 / BP-1).